We begin with the raw amino-acid sequence, 304 residues long: MTEQNLLQSLAQMVTEQRNANSIDIDRLNAAEIVKIINQEDKSVPFAVEQCLPQIALAVEKIVTAFRQGGRLVYIGAGTSGRLGVLDASECPPTYGVPSDMVVGIIAGGERALRHPIEGAEDNPQQGQADLENIHFTAKDVLVGIAASGRTPYVIGALNYAKSLDAVTVAITGNPGSAMTQIADIAIEAVVGQEVLTGSSRMKSGTAQKLVLNMLTTASMILMGKCYQNLMVDVQASNEKLRARAVRIVMQATECSKDVAQETLQRADNNAKLAIMMVLSGLEKTDAAQVLDRHQGKLRQALAQ.

Residues 62 to 225 form the SIS domain; sequence IVTAFRQGGR…TTASMILMGK (164 aa). Glu-90 (proton donor) is an active-site residue. Glu-121 is a catalytic residue.

The protein belongs to the GCKR-like family. MurNAc-6-P etherase subfamily. As to quaternary structure, homodimer.

It catalyses the reaction N-acetyl-D-muramate 6-phosphate + H2O = N-acetyl-D-glucosamine 6-phosphate + (R)-lactate. It participates in amino-sugar metabolism; 1,6-anhydro-N-acetylmuramate degradation. It functions in the pathway amino-sugar metabolism; N-acetylmuramate degradation. Its pathway is cell wall biogenesis; peptidoglycan recycling. Its function is as follows. Specifically catalyzes the cleavage of the D-lactyl ether substituent of MurNAc 6-phosphate, producing GlcNAc 6-phosphate and D-lactate. Together with AnmK, is also required for the utilization of anhydro-N-acetylmuramic acid (anhMurNAc) either imported from the medium or derived from its own cell wall murein, and thus plays a role in cell wall recycling. This Actinobacillus succinogenes (strain ATCC 55618 / DSM 22257 / CCUG 43843 / 130Z) protein is N-acetylmuramic acid 6-phosphate etherase.